Reading from the N-terminus, the 34-residue chain is Potassium channel toxin (34 aa).

Cystine bridges form between Cys6-Cys25, Cys11-Cys29, and Cys15-Cys31.

Belongs to the short scorpion toxin superfamily. Potassium channel inhibitor family. Alpha-KTx 21 subfamily. In terms of tissue distribution, expressed by the venom gland.

It localises to the secreted. Toxin that blocks voltage-gated potassium channels (Kv). In Tityus metuendus (Scorpion), this protein is Potassium channel toxin.